The primary structure comprises 858 residues: Putative glutamate--cysteine ligase 2-3 (858 aa).

The carboxylate-amine ligase stretch occupies residues 1-372 (MSDARNVAVG…RDVPPAGASL (372 aa)). Positions 373-858 (GVAPAVSAPD…GSKDTWIPRR (486 aa)) are unknown.

In the N-terminal section; belongs to the glutamate--cysteine ligase type 2 family. YbdK subfamily.

The enzyme catalyses L-cysteine + L-glutamate + ATP = gamma-L-glutamyl-L-cysteine + ADP + phosphate + H(+). In terms of biological role, ATP-dependent carboxylate-amine ligase which exhibits weak glutamate--cysteine ligase activity. The polypeptide is Putative glutamate--cysteine ligase 2-3 (Frankia alni (strain DSM 45986 / CECT 9034 / ACN14a)).